The primary structure comprises 301 residues: Mitochondrial ornithine transporter 1 (301 aa).

Helical transmembrane passes span 5–25 (PAIQ…ACVL), 68–88 (SPAL…YGFC), 110–130 (AAAG…TELV), 168–188 (GFYH…FFFF), 207–227 (LGPV…WLAV), and 237–257 (IQVL…LSIV). Solcar repeat units follow at residues 7–91 (IQAA…CQQV), 104–197 (LSDL…SRSF), and 207–293 (LGPV…SRKL).

The protein belongs to the mitochondrial carrier (TC 2.A.29) family. In terms of tissue distribution, widely expressed, with highest levels in the liver, testis and kidney. In the brain, expressed at high levels in the hypothalamus.

The protein resides in the mitochondrion inner membrane. Its subcellular location is the mitochondrion membrane. It carries out the reaction L-citrulline(in) + L-ornithine(out) + H(+)(in) = L-citrulline(out) + L-ornithine(in) + H(+)(out). The enzyme catalyses L-ornithine(in) + L-arginine(out) = L-ornithine(out) + L-arginine(in). It catalyses the reaction L-ornithine(out) + L-lysine(in) = L-ornithine(in) + L-lysine(out). The catalysed reaction is L-lysine(out) + H(+)(in) = L-lysine(in) + H(+)(out). It carries out the reaction L-ornithine(out) + H(+)(in) = L-ornithine(in) + H(+)(out). With respect to regulation, inhibited by pyridoxal 5'-phosphate as well as by mercurials (mersalyl, p-chloromercuribenzene sulfonate, and mercuric chloride), N-ethylmaleimide and spermine. Functionally, mitochondrial ornithine-citrulline antiporter. Catalyzes the exchange between cytosolic ornithine and mitochondrial citrulline plus an H(+), the proton compensates the positive charge of ornithine thus leading to an electroneutral transport. Plays a crucial role in the urea cycle, by connecting the cytosolic and the intramitochondrial reactions of the urea cycle. Lysine and arginine are also transported by the antiport mechanism. In addition, catalyzes an electroneutral exchange of ornithine or lysine for H(+), a reaction driven by the pH gradient across the inner membrane. In Mus musculus (Mouse), this protein is Mitochondrial ornithine transporter 1.